A 73-amino-acid polypeptide reads, in one-letter code: Large ribosomal subunit protein bL31 (73 aa).

This sequence belongs to the bacterial ribosomal protein bL31 family. Type A subfamily. Part of the 50S ribosomal subunit.

Its function is as follows. Binds the 23S rRNA. The sequence is that of Large ribosomal subunit protein bL31 (rpmE) from Roseobacter denitrificans (strain ATCC 33942 / OCh 114) (Erythrobacter sp. (strain OCh 114)).